Reading from the N-terminus, the 632-residue chain is Chaperone protein HtpG (632 aa).

Residues 1 to 339 (MTQQTMSFQA…SSDLPLNVSR (339 aa)) are a; substrate-binding. The tract at residues 340 to 559 (EILQESRDVK…DNDMSGYLQR (220 aa)) is b. Residues 560–632 (MLKAAGQSAP…TNALLLSRAA (73 aa)) form a c region.

The protein belongs to the heat shock protein 90 family. In terms of assembly, homodimer.

It is found in the cytoplasm. Functionally, molecular chaperone. Has ATPase activity. This chain is Chaperone protein HtpG, found in Burkholderia pseudomallei (strain 1106a).